We begin with the raw amino-acid sequence, 403 residues long: RILP-like protein 1 (403 aa).

Ser-7 is subject to Phosphoserine. The RH1 domain occupies 10 to 97 (AAESALEKNV…RLERMDRIEK (88 aa)). S-nitrosocysteine is present on Cys-47. The stretch at 76–258 (ELDELRLELD…KLRERLQGEH (183 aa)) forms a coiled coil. 3 disordered regions span residues 254 to 275 (LQGE…GEES), 327 to 352 (EMEE…PESG), and 384 to 403 (ANTH…LQHL). Phosphoserine is present on Ser-259. Positions 262–275 (GEEEPETEPVGEES) are enriched in acidic residues. An RH2 domain is found at 291-356 (RPRFTLQELR…PQPESGIKRL (66 aa)). Residues 394 to 403 (EQGQEALQHL) show a composition bias toward polar residues.

This sequence belongs to the RILPL family. As to quaternary structure, interacts (when S-nitrosylated) with GAPDH. Interacts with RAB8A; interaction is dependent on the phosphorylation of 'Thr-72' of RAB8A. Interacts with RAB10 and RAB12; the interaction is dependent on the phosphorylation of 'Thr-73' of RAB10, and 'Ser-105' of RAB12. Post-translationally, S-nitrosylation is required for the interaction with GAPDH. In terms of tissue distribution, widely expressed. Expressed at lower level in liver and kidney.

The protein localises to the cytoplasm. The protein resides in the cytosol. Its subcellular location is the cytoskeleton. It is found in the microtubule organizing center. It localises to the centrosome. The protein localises to the centriole. The protein resides in the cilium basal body. Functionally, plays a role in the regulation of cell shape and polarity. Plays a role in cellular protein transport, including protein transport away from primary cilia. Neuroprotective protein, which acts by sequestring GAPDH in the cytosol and prevent the apoptotic function of GAPDH in the nucleus. Competes with SIAH1 for binding GAPDH. Does not regulate lysosomal morphology and distribution. Binds to RAB10 following LRRK2-mediated RAB10 phosphorylation which leads to inhibition of ciliogenesis. This is RILP-like protein 1 (RILPL1) from Homo sapiens (Human).